Here is a 79-residue protein sequence, read N- to C-terminus: U-scoloptoxin(15)-Sm1a (79 aa).

Residues 1–25 (MKMNVVVLSVVVLLLFIANIQQTEA) form the signal peptide.

This sequence belongs to the scoloptoxin-15 family. Post-translationally, contains 2 disulfide bonds. Expressed by the venom gland.

The protein resides in the secreted. The polypeptide is U-scoloptoxin(15)-Sm1a (Scolopendra morsitans (Tanzanian blue ringleg centipede)).